A 79-amino-acid chain; its full sequence is Major outer membrane lipoprotein Lpp 2 (79 aa).

An N-terminal signal peptide occupies residues 1–21 (MNRTNQLILGAVVLGSTLLAG). The N-palmitoyl cysteine moiety is linked to residue cysteine 22. The S-diacylglycerol cysteine moiety is linked to residue cysteine 22. 2 consecutive repeats follow at residues 25–35 (NAKIDQLSSDV) and 39–49 (SAKVEQLSNDV). Positions 28-69 (IDQLSSDVQTLSAKVEQLSNDVNAMRSDVQAAKDDAARANQR) form a coiled coil. Position 79 is an N6-murein peptidoglycan lysine (lysine 79).

This sequence belongs to the Lpp family. In terms of assembly, homotrimer.

The protein resides in the cell outer membrane. It is found in the secreted. It localises to the cell wall. Plays an important role in virulence. A highly abundant outer membrane lipoprotein that controls the distance between the inner and outer membranes. The only protein known to be covalently linked to the peptidoglycan network (PGN). Also non-covalently binds the PGN. The link between the cell outer membrane and PGN contributes to maintenance of the structural and functional integrity of the cell envelope, and maintains the correct distance between the PGN and the outer membrane. The polypeptide is Major outer membrane lipoprotein Lpp 2 (Salmonella typhimurium (strain LT2 / SGSC1412 / ATCC 700720)).